Here is a 184-residue protein sequence, read N- to C-terminus: Tumor necrosis factor alpha-induced protein 8-like protein 2 (184 aa).

Ser3 bears the Phosphoserine; by MAP3K7 mark.

It belongs to the TNFAIP8 family. TNFAIP8L2 subfamily. As to quaternary structure, may interact with CASP8; however, such result is unclear since PubMed:19079267 could not reproduce the interaction with CASP8. Interacts with RAC1. Post-translationally, phosphorylated by TAK1/MAP3K7; this phosphorylation triggers association with BTRC and subsequent ubiquitination and degradation. Ubiquitinated in a BTRC-depdent manner; leading to degradation mediated through the proteasome pathway. Expressed in T-cells, B-cells, macrophages, neurons in the brain and brainstem, and stratified squamous epithelia of the esophagus, cervix and skin.

The protein localises to the cytoplasm. Its subcellular location is the nucleus. It is found in the lysosome. Acts as a negative regulator of innate and adaptive immunity by maintaining immune homeostasis. Plays a regulatory role in the Toll-like signaling pathway by determining the strength of LPS-induced signaling and gene expression. Inhibits TCR-mediated T-cell activation and negatively regulate T-cell function to prevent hyperresponsiveness. Also inhibits autolysosome formation via negatively modulating MTOR activation by interacting with RAC1 and promoting the disassociation of the RAC1-MTOR complex. Plays an essential role in NK-cell biology by acting as a checkpoint and displaying an expression pattern correlating with NK-cell maturation process and by negatively regulating NK-cell maturation and antitumor immunity. Mechanistically, suppresses IL-15-triggered mTOR activity in NK-cells. The chain is Tumor necrosis factor alpha-induced protein 8-like protein 2 (TNFAIP8L2) from Homo sapiens (Human).